The sequence spans 196 residues: Anthranilate synthase component 2 (196 aa).

Residues 4-196 (LILIIDNYDS…RDILENFLRM (193 aa)) form the Glutamine amidotransferase type-1 domain. An L-glutamine-binding site is contributed by 60 to 62 (GPG). Residue Cys-89 is the Nucleophile; for GATase activity of the active site. L-glutamine-binding positions include Gln-93 and 138–139 (SL). Residues His-177 and Glu-179 each act as for GATase activity in the active site.

Heterotetramer consisting of two non-identical subunits: a beta subunit (TrpG) and a large alpha subunit (TrpE).

The catalysed reaction is chorismate + L-glutamine = anthranilate + pyruvate + L-glutamate + H(+). The protein operates within amino-acid biosynthesis; L-tryptophan biosynthesis; L-tryptophan from chorismate: step 1/5. Part of a heterotetrameric complex that catalyzes the two-step biosynthesis of anthranilate, an intermediate in the biosynthesis of L-tryptophan. In the first step, the glutamine-binding beta subunit (TrpG) of anthranilate synthase (AS) provides the glutamine amidotransferase activity which generates ammonia as a substrate that, along with chorismate, is used in the second step, catalyzed by the large alpha subunit of AS (TrpE) to produce anthranilate. In the absence of TrpG, TrpE can synthesize anthranilate directly from chorismate and high concentrations of ammonia. In Methanothermobacter marburgensis (strain ATCC BAA-927 / DSM 2133 / JCM 14651 / NBRC 100331 / OCM 82 / Marburg) (Methanobacterium thermoautotrophicum), this protein is Anthranilate synthase component 2 (trpG).